The chain runs to 89 residues: Small ribosomal subunit protein uS15 (89 aa).

Belongs to the universal ribosomal protein uS15 family. Part of the 30S ribosomal subunit. Forms a bridge to the 50S subunit in the 70S ribosome, contacting the 23S rRNA.

Functionally, one of the primary rRNA binding proteins, it binds directly to 16S rRNA where it helps nucleate assembly of the platform of the 30S subunit by binding and bridging several RNA helices of the 16S rRNA. Forms an intersubunit bridge (bridge B4) with the 23S rRNA of the 50S subunit in the ribosome. The sequence is that of Small ribosomal subunit protein uS15 from Burkholderia mallei (strain NCTC 10247).